Consider the following 390-residue polypeptide: 5-hydroxytryptamine receptor 1B (390 aa).

Residues 1-21 are disordered; it reads MEETGAQCAPPPPAGSQTGVS. Residues 1–46 lie on the Extracellular side of the membrane; sequence MEETGAQCAPPPPAGSQTGVSQVNLSAAPSHNCSTEGYVYQDSVAL. Asn-24 and Asn-32 each carry an N-linked (GlcNAc...) asparagine glycan. A helical membrane pass occupies residues 47-72; it reads PWKVLLVVLLALITLATTLSNAFVIA. Residues 73–86 are Cytoplasmic-facing; sequence TVYRTRKLHTPANY. A helical transmembrane segment spans residues 87 to 111; it reads LIASLAVTDLLVSILVMPISTMYVV. Topologically, residues 112-119 are extracellular; it reads TGRWTLGQ. The helical transmembrane segment at 120–145 threads the bilayer; that stretch reads VVCDFWLSSDITCCTASILHLCVIAL. The cysteines at positions 122 and 199 are disulfide-linked. Ergotamine-binding residues include Asp-129 and Thr-134. The short motif at 146-148 is the DRY motif; important for ligand-induced conformation changes and signaling element; sequence DRY. The Cytoplasmic segment spans residues 146-165; it reads DRYWAITDAVEYSAKRTPKR. The helical transmembrane segment at 166-184 threads the bilayer; that stretch reads AAVMIALVWVFSISISLPP. Residues 185–205 are Extracellular-facing; it reads FFWRQAKAEEEVLDCLVNTDH. Residue Val-201 participates in ergotamine binding. Residues 206-229 form a helical membrane-spanning segment; it reads ILYTVYSTVGAFYFPTLLLIALYS. Over 230 to 315 the chain is Cytoplasmic; that stretch reads RIYVEARSRI…AARERKATKT (86 aa). Positions 251 to 282 are disordered; sequence LTRAQLMTDSPGSTSSVTSINSRAPDVPSESG. The span at 255 to 272 shows a compositional bias: polar residues; sequence QLMTDSPGSTSSVTSINS. Residues 316–337 traverse the membrane as a helical segment; it reads LGIILGAFIVCWLPFFIISLVM. At 338–347 the chain is on the extracellular side; that stretch reads PICKDACWFH. The chain crosses the membrane as a helical span at residues 348-370; that stretch reads LAIFDFFTWLGYLNSLINPIIYT. Positions 365-369 match the NPxxY motif; important for ligand-induced conformation changes and signaling motif; sequence NPIIY. The Cytoplasmic portion of the chain corresponds to 371–390; sequence MSNEDFKQAFHKLIRFKCAS. Cys-388 carries S-palmitoyl cysteine lipidation.

This sequence belongs to the G-protein coupled receptor 1 family. As to quaternary structure, homodimer. Heterodimer with HTR1D. Post-translationally, phosphorylated. Desensitization of the receptor may be mediated by its phosphorylation. Palmitoylated.

The protein resides in the cell membrane. Its function is as follows. G-protein coupled receptor for 5-hydroxytryptamine (serotonin). Also functions as a receptor for ergot alkaloid derivatives, various anxiolytic and antidepressant drugs and other psychoactive substances, such as lysergic acid diethylamide (LSD). Ligand binding causes a conformation change that triggers signaling via guanine nucleotide-binding proteins (G proteins) and modulates the activity of downstream effectors, such as adenylate cyclase. HTR1B is coupled to G(i)/G(o) G alpha proteins and mediates inhibitory neurotransmission by inhibiting adenylate cyclase activity. Arrestin family members inhibit signaling via G proteins and mediate activation of alternative signaling pathways. Regulates the release of 5-hydroxytryptamine, dopamine and acetylcholine in the brain, and thereby affects neural activity, nociceptive processing, pain perception, mood and behavior. Besides, plays a role in vasoconstriction of cerebral arteries. The protein is 5-hydroxytryptamine receptor 1B (HTR1B) of Equus caballus (Horse).